The sequence spans 352 residues: MQHDKNEDIYRLSTYYYDLPPELIAQYPAEYRDSSRLLVLDRKSGDLNDRAFKDISLYLKKGDALVLNETRVIPARFFAYKESGARVEILLLKKLGDDWEALVKPARRLKAGSRVFLSPDKPLVIEIVEELDFAGGRRVRFQDSVDEDTLLQEQGHIPLPPYINRPDEELDRERYQTVYACKSGSVAAPTAGLHFTPDLLKEITLQGINIVRIVLHVGMGTFRPVKNEDIRQHNMHLEYYEVAEDAAALLNLTRESGGQIVAVGTTVVRTLESVYNKDCGFLAGKGETNKYIFPGYQFRAIDKLLTNFHLPGSSLLMLVAGFAGTESTLAAYRHAVENRYRFFSYGDAMLVI.

This sequence belongs to the QueA family. In terms of assembly, monomer.

It is found in the cytoplasm. The catalysed reaction is 7-aminomethyl-7-carbaguanosine(34) in tRNA + S-adenosyl-L-methionine = epoxyqueuosine(34) in tRNA + adenine + L-methionine + 2 H(+). Its pathway is tRNA modification; tRNA-queuosine biosynthesis. Transfers and isomerizes the ribose moiety from AdoMet to the 7-aminomethyl group of 7-deazaguanine (preQ1-tRNA) to give epoxyqueuosine (oQ-tRNA). This is S-adenosylmethionine:tRNA ribosyltransferase-isomerase from Syntrophomonas wolfei subsp. wolfei (strain DSM 2245B / Goettingen).